The primary structure comprises 831 residues: uncharacterized protein (831 aa).

The interval 285-311 is disordered; sequence ALNLKRQQLKEEQKEQQSTGDRSDVST. 470–477 serves as a coordination point for ATP; sequence GDTGNGKS.

This is an uncharacterized protein from Bacillus subtilis (strain 168).